A 340-amino-acid polypeptide reads, in one-letter code: Cyclic GMP-AMP synthase-like receptor 3 (340 aa).

ATP-binding positions include serine 62 and 74 to 76; that span reads EAD. Mg(2+) is bound by residues glutamate 74, aspartate 76, and aspartate 177. ATP is bound by residues lysine 241 and 255 to 259; that span reads SYHLK. Residues aspartate 267 and aspartate 270 each contribute to the Mn(2+) site.

Belongs to the mab-21 family. Requires Mg(2+) as cofactor. Mn(2+) serves as cofactor.

The enzyme catalyses 2 ATP = 3',3'-c-di-AMP + 2 diphosphate. Its function is as follows. Nucleotidyltransferase that catalyzes the formation of cyclic di-AMP (3',3'-c-di-AMP) from 2 molecules of ATP and plays a key role in innate immunity. Acts as a key sensor of double-stranded RNA (dsRNA), the presence of dsRNA in the cytoplasm being a danger signal that triggers the immune responses. Directly binds dsRNA, activating the nucleotidyltransferase activity, leading to synthesis of 3',3'-c-di-AMP, a second messenger that binds to and activates Sting, thereby triggering the immune response via activation of the NF-kappa-B transcription factor. The polypeptide is Cyclic GMP-AMP synthase-like receptor 3 (Stylophora pistillata (Smooth cauliflower coral)).